Consider the following 402-residue polypeptide: Aminotransferase-like protein FGM3 (402 aa).

Pyridoxal 5'-phosphate-binding positions include 137-138 (TI), Asp-218, and 282-283 (FG).

It belongs to the class-V pyridoxal-phosphate-dependent aminotransferase family. Csd subfamily.

In terms of biological role, aminotransferase-like protein; part of the Fg3_54/C64 gene cluster that mediates the biosynthesis of the octapeptide fusaoctaxin A, a virulence factor that is required for cell-to-cell invasiveness of plant host. The 2 nonribosomal peptide synthetases NRPS9 and NRPS5 form an assembly line which likely utilizes GABA as a starter unit (loaded on the unique module M1 of NRPS9) and sequentially incorporates seven extender units composed of the residues L-Ala, L-allo-Ile, L-Ser, L-Val, L-Ser, L-Leu and L-Leu, respectively. During the process, each of the residues that are tethered on modules M3-M7 of NRPS5 containing an E domain can undergo an epimerization reaction to produce a D-configuration before the transpeptidation reaction occurs. The elongation of the peptidyl chain might be terminated by module M8-mediated L-Leu incorporation, followed by R domain-catalyzed 4 electron reduction to release the resulting octapeptide from the assembly line as an alcohol. Fusaoctaxin A is cleaved by the cluster specific ABC transporter FGM5 to the pentapeptide fusapentaxin A and the tripeptide fusatrixin A. The other enzymes from the cluster, FGM1, FGM2, FGM3 and FGM9 seem not to be involved in the biosynthesis of fusaoctaxin A and their functions have still to be determined. The polypeptide is Aminotransferase-like protein FGM3 (Gibberella zeae (strain ATCC MYA-4620 / CBS 123657 / FGSC 9075 / NRRL 31084 / PH-1) (Wheat head blight fungus)).